The chain runs to 184 residues: MGRPVGQTNQAQPSVQHTASPSNKVSHNGGIGKPANIPTGIPVNYQQTQNQWSSQLFDCMNDSENAVITLIAPCVTFGQIAEIVDEGATPCATAGLLYGALFFTGASFVYSYMFRARIRKKFGLPDAPAPDWITHLVCMPFALCQEYRELKHHGFDPILGWAGNVQQAQQQEMMTPPTGQRMMG.

Positions Met-1–Ser-26 are enriched in polar residues. Residues Met-1 to Lys-33 form a disordered region. A helical transmembrane segment spans residues Ala-94 to Phe-114.

Belongs to the cornifelin family.

Its subcellular location is the membrane. May be involved in heavy metals transport. This is Protein PLANT CADMIUM RESISTANCE 5 (PCR5) from Arabidopsis thaliana (Mouse-ear cress).